A 180-amino-acid polypeptide reads, in one-letter code: Putative manganese efflux pump MntP (180 aa).

A run of 6 helical transmembrane segments spans residues 4-24 (FVTI…VALG), 40-60 (LTIG…GKWL), 64-84 (FDVI…VQMA), 103-123 (LLLF…SFGI), 129-149 (FVTV…GLIV), and 156-176 (FLGA…GLKI).

This sequence belongs to the MntP (TC 9.B.29) family.

Its subcellular location is the cell membrane. In terms of biological role, probably functions as a manganese efflux pump. This chain is Putative manganese efflux pump MntP, found in Shouchella clausii (strain KSM-K16) (Alkalihalobacillus clausii).